The sequence spans 612 residues: Adherence factor (612 aa).

6 stretches are compositionally biased toward low complexity: residues 1–18 (MSSF…NLSS), 47–68 (SSMM…QQQQ), 94–106 (LQTQ…SATT), 115–141 (YNQQ…NNMQ), 182–203 (QSAQ…QPRS), and 218–228 (SRQVSGSGRST). Disordered stretches follow at residues 1 to 20 (MSSF…SSFQ), 46 to 68 (ASSM…QQQQ), 94 to 143 (LQTQ…MQFF), 179 to 273 (PQLQ…NNNK), 443 to 480 (KEKK…NTNN), 497 to 527 (SQLM…LSNN), and 546 to 612 (SQEQ…KQFY). Over residues 230 to 240 (AKKQSAITSGS) the composition is skewed to polar residues. Positions 254-272 (TSVANSTSTTTMTTTNNNN) are enriched in low complexity. Basic and acidic residues predominate over residues 443–457 (KEKKLTEKTIEQREQ). 2 stretches are compositionally biased toward polar residues: residues 465–480 (ANHS…NTNN) and 497–512 (SQLM…ATKI). Residues 555–571 (NQHHHNHQQHPLIHHHQ) show a composition bias toward basic residues. The segment covering 585-606 (PSTIPTSSLSIQQQQQQQQQQL) has biased composition (low complexity).

In terms of biological role, surface antigen mediating adhesion and aggregation in S.cerevisiae. This Candida albicans (strain SC5314 / ATCC MYA-2876) (Yeast) protein is Adherence factor (ADF1).